We begin with the raw amino-acid sequence, 149 residues long: Transcriptional repressor NrdR (149 aa).

The segment at 3-34 (CPFCSHPETQVVETRVAEDGDFVRRRRQCGAC) is a zinc-finger region. The region spanning 49-139 (PNVVKKDGRR…VYRNFEDIDE (91 aa)) is the ATP-cone domain.

This sequence belongs to the NrdR family. The cofactor is Zn(2+).

Functionally, negatively regulates transcription of bacterial ribonucleotide reductase nrd genes and operons by binding to NrdR-boxes. The protein is Transcriptional repressor NrdR of Paracidovorax citrulli (strain AAC00-1) (Acidovorax citrulli).